We begin with the raw amino-acid sequence, 101 residues long: Multivesicular body sorting factor 12 (101 aa).

Met-1 bears the N-acetylmethionine mark. Ser-94 bears the Phosphoserine mark.

Component of the ESCRT-I complex (endosomal sorting complex required for transport I) which consists of STP22, VPS28, SRN2 and MVB12 in a 1:1:1:1 stoichiometry. Interacts with STP22 and SRN2.

It localises to the cytoplasm. Its subcellular location is the endosome. It is found in the late endosome membrane. Component of the ESCRT-I complex, a regulator of vesicular trafficking process. Binds to ubiquitinated cargo proteins and is required for the sorting of endocytic ubiquitinated cargos into multivesicular bodies (MVBs). Appears to be involved in cargo sorting and release of the ESCRT-I complex from the MVBs. The polypeptide is Multivesicular body sorting factor 12 (MVB12) (Saccharomyces cerevisiae (strain ATCC 204508 / S288c) (Baker's yeast)).